A 271-amino-acid chain; its full sequence is Small ribosomal subunit protein uS2 (271 aa).

The disordered stretch occupies residues 235-271 (FDAKNPLKPQNYNAPNKRPYQDSPRKPSYQNQNQNQI). Residues 262–271 (SYQNQNQNQI) show a composition bias toward polar residues.

This sequence belongs to the universal ribosomal protein uS2 family.

In Onion yellows phytoplasma (strain OY-M), this protein is Small ribosomal subunit protein uS2.